The chain runs to 150 residues: Large ribosomal subunit protein bL9 (150 aa).

Belongs to the bacterial ribosomal protein bL9 family.

Its function is as follows. Binds to the 23S rRNA. This Clavibacter sepedonicus (Clavibacter michiganensis subsp. sepedonicus) protein is Large ribosomal subunit protein bL9.